The following is an 881-amino-acid chain: Probable alpha/beta-glucosidase agdC (881 aa).

A signal peptide spans 1–14; it reads MLRSLLLLAPLVGA. Residues asparagine 171, asparagine 293, and asparagine 373 are each glycosylated (N-linked (GlcNAc...) asparagine). The active-site Nucleophile is the aspartate 422. Glutamate 425 is a catalytic residue. Residues 440-485 form a disordered region; that stretch reads YARDNDLPPAAPPVRPSNPRPLPGFPGDFQPSSSSKRSTKGSKVGL. Residues 448–463 show a composition bias toward pro residues; it reads PAAPPVRPSNPRPLPG. Asparagine 506 carries an N-linked (GlcNAc...) asparagine glycan. Aspartate 571 acts as the Proton donor in catalysis. N-linked (GlcNAc...) asparagine glycosylation is found at asparagine 572, asparagine 608, and asparagine 742.

This sequence belongs to the glycosyl hydrolase 31 family.

It localises to the secreted. It carries out the reaction Hydrolysis of terminal, non-reducing (1-&gt;4)-linked alpha-D-glucose residues with release of alpha-D-glucose.. It catalyses the reaction Hydrolysis of terminal, non-reducing beta-D-glucosyl residues with release of beta-D-glucose.. Glucosidase involved in the degradation of cellulosic biomass. Has both alpha- and beta-glucosidase activity. In Aspergillus fumigatus (strain CBS 144.89 / FGSC A1163 / CEA10) (Neosartorya fumigata), this protein is Probable alpha/beta-glucosidase agdC (agdC).